The following is a 451-amino-acid chain: UDP-N-acetylmuramoylalanine--D-glutamate ligase (451 aa).

Residue 120–126 (GSNGKTT) coordinates ATP.

Belongs to the MurCDEF family.

Its subcellular location is the cytoplasm. It carries out the reaction UDP-N-acetyl-alpha-D-muramoyl-L-alanine + D-glutamate + ATP = UDP-N-acetyl-alpha-D-muramoyl-L-alanyl-D-glutamate + ADP + phosphate + H(+). It functions in the pathway cell wall biogenesis; peptidoglycan biosynthesis. In terms of biological role, cell wall formation. Catalyzes the addition of glutamate to the nucleotide precursor UDP-N-acetylmuramoyl-L-alanine (UMA). The protein is UDP-N-acetylmuramoylalanine--D-glutamate ligase of Bacillus pumilus (strain SAFR-032).